The primary structure comprises 136 residues: Small ribosomal subunit protein uS11c (136 aa).

This sequence belongs to the universal ribosomal protein uS11 family. Part of the 30S ribosomal subunit.

The protein localises to the plastid. It localises to the chloroplast. This is Small ribosomal subunit protein uS11c from Helianthus annuus (Common sunflower).